The following is a 190-amino-acid chain: Dynactin subunit 6 (190 aa).

Threonine 186 bears the Phosphothreonine; by CDK1 mark.

It belongs to the dynactin subunits 5/6 family. Dynactin subunit 6 subfamily. In terms of assembly, subunit of dynactin, a multiprotein complex part of a tripartite complex with dynein and a adapter, such as BICDL1, BICD2 or HOOK3. The dynactin complex is built around ACTR1A/ACTB filament and consists of an actin-related filament composed of a shoulder domain, a pointed end and a barbed end. Its length is defined by its flexible shoulder domain. The soulder is composed of 2 DCTN1 subunits, 4 DCTN2 and 2 DCTN3. The 4 DCNT2 (via N-terminus) bind the ACTR1A filament and act as molecular rulers to determine the length. The pointed end is important for binding dynein-dynactin cargo adapters. Consists of 4 subunits: ACTR10, DCNT4, DCTN5 and DCTN6. Within the complex DCTN6 forms a heterodimer with DCTN5. The barbed end is composed of a CAPZA1:CAPZB heterodimers, which binds ACTR1A/ACTB filament and dynactin and stabilizes dynactin. Interacts with PLK1. Interacts with N4BP2L1. Post-translationally, phosphorylation at Thr-186 by CDK1 during mitotic prometaphase creates a binding site for PLK1 that facilitates its recruitment to kinetochores. As to expression, ubiquitous.

It localises to the cytoplasm. It is found in the cytoskeleton. Its subcellular location is the chromosome. The protein resides in the centromere. The protein localises to the kinetochore. Functionally, part of the dynactin complex that activates the molecular motor dynein for ultra-processive transport along microtubules. The protein is Dynactin subunit 6 of Homo sapiens (Human).